Reading from the N-terminus, the 80-residue chain is Sec-independent protein translocase protein TatA (80 aa).

A helical membrane pass occupies residues 1 to 21; it reads MGQIGIWQILIIALVILVLFG. The segment at 38-80 is disordered; the sequence is SFKKGLNEEDKPAEPAAKIEGPSHEAKPAGEAAKDPRPADKQG. Over residues 58–80 the composition is skewed to basic and acidic residues; it reads GPSHEAKPAGEAAKDPRPADKQG.

This sequence belongs to the TatA/E family. In terms of assembly, the Tat system comprises two distinct complexes: a TatABC complex, containing multiple copies of TatA, TatB and TatC subunits, and a separate TatA complex, containing only TatA subunits. Substrates initially bind to the TatABC complex, which probably triggers association of the separate TatA complex to form the active translocon.

Its subcellular location is the cell inner membrane. In terms of biological role, part of the twin-arginine translocation (Tat) system that transports large folded proteins containing a characteristic twin-arginine motif in their signal peptide across membranes. TatA could form the protein-conducting channel of the Tat system. This chain is Sec-independent protein translocase protein TatA, found in Erythrobacter litoralis (strain HTCC2594).